The primary structure comprises 193 residues: MEVDLLHFEKKYHNYIVAGIDEAGRGPLAGPVVASAVIIDNTNIIPGIKDSKKLSKKKRELLYEQITSNYVWAAAIISHIEIDEINILEATKKACSIAAANLSLKPEIVLVDGNMPFKDKRFVSMINGDNLSLSIAAASIVAKVTRDRLMLDLSTEFPQYLWHKNSGYGTKEHIEAINMHGLSPYHRRSFKCC.

The 179-residue stretch at tyrosine 15–cysteine 193 folds into the RNase H type-2 domain. 3 residues coordinate a divalent metal cation: aspartate 21, glutamate 22, and aspartate 112.

The protein belongs to the RNase HII family. The cofactor is Mn(2+). It depends on Mg(2+) as a cofactor.

It is found in the cytoplasm. The catalysed reaction is Endonucleolytic cleavage to 5'-phosphomonoester.. Endonuclease that specifically degrades the RNA of RNA-DNA hybrids. In Rickettsia felis (strain ATCC VR-1525 / URRWXCal2) (Rickettsia azadi), this protein is Ribonuclease HII.